Here is a 207-residue protein sequence, read N- to C-terminus: Small ribosomal subunit protein uS4c (207 aa).

Residues 92 to 150 (MRLDNILFRLGFVPTIPSARQLINHRHILVNNRIVDVPSFHCKPKDIITIGSPKTYQSI) enclose the S4 RNA-binding domain.

Belongs to the universal ribosomal protein uS4 family. As to quaternary structure, part of the 30S ribosomal subunit. Contacts protein S5. The interaction surface between S4 and S5 is involved in control of translational fidelity.

The protein localises to the plastid. The protein resides in the chloroplast. Functionally, one of the primary rRNA binding proteins, it binds directly to 16S rRNA where it nucleates assembly of the body of the 30S subunit. In terms of biological role, with S5 and S12 plays an important role in translational accuracy. The sequence is that of Small ribosomal subunit protein uS4c (rps4) from Equisetum variegatum (Variegated horsetail).